The following is a 292-amino-acid chain: MQVPKCEICDDDFSSEEDGDHNPRNLKCSHTLCEGCIKKLLKNGRVVCPFCREPTEVPVYNIKSLHKNFSLIQMIKIVTKTTEVEKNWDNFPPKCVEHPYNVAEFACIESNCSSKNKLMCQTCEEFGAHKGHAKELLITKTDKFRKKLEFWINQLKLNIQNCTVKKNELEEAVVKSEQLLNIKVKKIKNHFDKIRQSVDKKEKGIIDETTAEATRIQKFNNEKITYLIDLQARHVKDIEAIEKQKNMTDIDLYNTGIDLPCFFGHLNIEVFRPADTKEMDIKLPNFKFEDGS.

The RING-type zinc finger occupies 6–52 (CEICDDDFSSEEDGDHNPRNLKCSHTLCEGCIKKLLKNGRVVCPFCR). The B box-type zinc finger occupies 90–137 (NFPPKCVEHPYNVAEFACIESNCSSKNKLMCQTCEEFGAHKGHAKELL). Residues Cys-95, His-98, Cys-123, and His-129 each contribute to the Zn(2+) site. Residues 152–179 (INQLKLNIQNCTVKKNELEEAVVKSEQL) adopt a coiled-coil conformation.

This sequence belongs to the TRIM/RBCC family. Interacts with E2 ubiquitin-conjugating enzyme ubc-21. Interacts with ced-6; this mediates interaction of trim-21 with ced-1 and is required for ced-1 ubiquitination. Interacts with nck-1; the interaction is required for ced-1 ubiquitination. In terms of tissue distribution, in early larva, observed mainly in pharyngeal and body wall muscle cells.

The protein resides in the cytoplasm. The catalysed reaction is S-ubiquitinyl-[E2 ubiquitin-conjugating enzyme]-L-cysteine + [acceptor protein]-L-lysine = [E2 ubiquitin-conjugating enzyme]-L-cysteine + N(6)-ubiquitinyl-[acceptor protein]-L-lysine.. The protein operates within protein modification; protein ubiquitination. In terms of biological role, E3 ubiquitin-protein ligase which catalyzes 'Lys-48'-linked polyubiquitination of ced-1, promoting its proteasomal degradation to maintain appropriate ced-1 levels for apoptotic cell clearance. Acts together with E2 ubiquitin-conjugating enzyme ubc-21. The chain is E3 ubiquitin-protein ligase trim-21 from Caenorhabditis elegans.